The following is an 865-amino-acid chain: Taste receptor type 1 member 3 (865 aa).

Positions 1–24 (MPGLALLGLTALLGLTALLDHGEG) are cleaved as a signal peptide. Over 25–573 (ATSCLSQQLR…FLAWGEPAVL (549 aa)) the chain is Extracellular. N134 and N267 each carry an N-linked (GlcNAc...) asparagine glycan. The chain crosses the membrane as a helical span at residues 574–594 (LLLALLALALGLALAALGLFL). The Cytoplasmic segment spans residues 595 to 606 (WHSDSPLVQASG). Residues 607–627 (GPRACFGLACLGLVCLSVLLF) traverse the membrane as a helical segment. The Extracellular segment spans residues 628-642 (PGQPGPASCLAQQPL). A helical transmembrane segment spans residues 643 to 663 (FHLPLTGCLSTFFLQAAEIFV). The Cytoplasmic segment spans residues 664–685 (GSELPPSWAEKMRGRLRGPWAW). The chain crosses the membrane as a helical span at residues 686–706 (LVVLLAMLAEAALCAWYLVAF). Residues 707 to 732 (PPEVVTDWRVLPTEALVHCHVHSWIS) are Extracellular-facing. The chain crosses the membrane as a helical span at residues 733–753 (FGLVHATNAMLAFLCFLGTFL). The Cytoplasmic portion of the chain corresponds to 754–765 (VQSRPGRYNGAR). The helical transmembrane segment at 766-786 (GLTFAMLAYFITWISFVPLFA) threads the bilayer. The Extracellular portion of the chain corresponds to 787-794 (NVHVAYQP). Residues 795–815 (AVQMGTILLCALGILATFHLP) form a helical membrane-spanning segment. At 816–865 (KCYLLLQRPELNTPEFFLEDNARAQGSSWGQGRGESGQKQVTPDPVTSPQ) the chain is on the cytoplasmic side. The disordered stretch occupies residues 840-865 (QGSSWGQGRGESGQKQVTPDPVTSPQ). Positions 852–865 (GQKQVTPDPVTSPQ) are enriched in polar residues.

Belongs to the G-protein coupled receptor 3 family. TAS1R subfamily. Forms homodimers or a heterodimer with TAS1R1. Expressed in taste buds.

Its subcellular location is the cell membrane. Putative taste receptor. TAS1R1/TAS1R3 responds to the umami taste stimulus (the taste of monosodium glutamate). The chain is Taste receptor type 1 member 3 (TAS1R3) from Felis catus (Cat).